A 400-amino-acid polypeptide reads, in one-letter code: Phosphoglycerate kinase (400 aa).

Substrate contacts are provided by residues 23–25 (DLN), R38, 61–64 (HFGR), R120, and R153. Residues K203, E325, and 355–358 (GGDT) contribute to the ATP site.

The protein belongs to the phosphoglycerate kinase family. Monomer.

It is found in the cytoplasm. It carries out the reaction (2R)-3-phosphoglycerate + ATP = (2R)-3-phospho-glyceroyl phosphate + ADP. It functions in the pathway carbohydrate degradation; glycolysis; pyruvate from D-glyceraldehyde 3-phosphate: step 2/5. The protein is Phosphoglycerate kinase of Agrobacterium fabrum (strain C58 / ATCC 33970) (Agrobacterium tumefaciens (strain C58)).